Consider the following 201-residue polypeptide: FMN-dependent NADH:quinone oxidoreductase (201 aa).

FMN-binding positions include Ser10, 16–18 (SQS), 96–99 (MYNF), and 140–143 (SRGG).

The protein belongs to the azoreductase type 1 family. As to quaternary structure, homodimer. FMN serves as cofactor.

It catalyses the reaction 2 a quinone + NADH + H(+) = 2 a 1,4-benzosemiquinone + NAD(+). It carries out the reaction N,N-dimethyl-1,4-phenylenediamine + anthranilate + 2 NAD(+) = 2-(4-dimethylaminophenyl)diazenylbenzoate + 2 NADH + 2 H(+). In terms of biological role, quinone reductase that provides resistance to thiol-specific stress caused by electrophilic quinones. Its function is as follows. Also exhibits azoreductase activity. Catalyzes the reductive cleavage of the azo bond in aromatic azo compounds to the corresponding amines. This Citrobacter koseri (strain ATCC BAA-895 / CDC 4225-83 / SGSC4696) protein is FMN-dependent NADH:quinone oxidoreductase.